A 612-amino-acid chain; its full sequence is MFS siderochrome iron transporter B (612 aa).

Residues 1-86 (MLHVLSVGPS…GAQAGVKKIE (86 aa)) are Cytoplasmic-facing. Positions 55–78 (DKEAAHAPANAETNNEEANPSDGA) are disordered. The segment covering 60-72 (HAPANAETNNEEA) has biased composition (low complexity). The helical transmembrane segment at 87-104 (AVTLSWTRGTAIWFLTLV) threads the bilayer. Topologically, residues 105–127 (NDFRLSMYTSLNAYATSSFLGHS) are extracellular. Residues 128 to 148 (LLTVINIVSYVMGGSVYIPMA) traverse the membrane as a helical segment. The Cytoplasmic segment spans residues 149–156 (KALDLWGR). A helical transmembrane segment spans residues 157 to 177 (AEGFLLMTFFCILGLILLASS). The Extracellular portion of the chain corresponds to 178-187 (QNLPTYCAGQ). Residues 188–208 (VFYKVGFGGLSYTWNVLAADV) traverse the membrane as a helical segment. The Cytoplasmic portion of the chain corresponds to 209 to 215 (TNLRNRG). A helical membrane pass occupies residues 216–236 (LAFAFTSSPALISAFAGSKAA). Over 237–246 (SDLLAHSTWR) the chain is Extracellular. A helical transmembrane segment spans residues 247–267 (WGFGMWAIILPVVALPIYGLL). Residues 268–302 (AYHLRQAEKKGVLVKETRDWSITPKTVWWAIMEFD) lie on the Cytoplasmic side of the membrane. The helical transmembrane segment at 303–323 (LPGVLLFAGGFVIFLLPFTLA) threads the bilayer. Over 324-334 (ATAPHGYQTDY) the chain is Extracellular. Residues 335–355 (IIAMITLGLALIIAFGFYEML) form a helical membrane-spanning segment. The Cytoplasmic segment spans residues 356–370 (VAPVPFLNYKFLIDR). The chain crosses the membrane as a helical span at residues 371–393 (TVLGACLLDMTYQVSYYCYASYL). The Extracellular portion of the chain corresponds to 394–409 (PSFLQVVYELDVATAG). The helical transmembrane segment at 410 to 430 (YVTNTFSVVSFVFLFFAGWLI) threads the bilayer. Over 431-435 (RWTGR) the chain is Cytoplasmic. Residues 436 to 456 (FKWILWVCVPLYIFGLGLMIH) traverse the membrane as a helical segment. At 457 to 463 (FRQPGGY) the chain is on the extracellular side. Residues 464-484 (IGYIVMCEIFFSVAGSVFILC) form a helical membrane-spanning segment. Residues 485–498 (VQLAVLASVDHQHV) lie on the Cytoplasmic side of the membrane. A helical transmembrane segment spans residues 499-519 (AAVLALLFVMGSIGGSIGSAI). Over 520-575 (CGAIWTSTFLSRLERNLPASAMPDLSLIYSSLPTQLSYPVGSATRTAIVEAYGYAQ) the chain is Extracellular. Residues 576–596 (ARMLIAGTAFMVLGFIWVGMM) form a helical membrane-spanning segment. Residues 597-612 (RNLNVKNMTQTKGNVV) are Cytoplasmic-facing.

It belongs to the major facilitator superfamily.

The protein resides in the cell tip. It is found in the cytoplasmic vesicle membrane. Its subcellular location is the cell membrane. Major facilitator transporter involved in triacetylfusarinine C (TAFC) uptake. Can also transport ferricrocin and coprogen, but not ferrichrysin. MirB plays a crucial role for virulence in a murine model of pulmonary aspergillosis, indicating that TAFC-mediated iron uptake plays a dominant role during infection. The sequence is that of MFS siderochrome iron transporter B from Aspergillus fumigatus (strain ATCC MYA-4609 / CBS 101355 / FGSC A1100 / Af293) (Neosartorya fumigata).